The sequence spans 399 residues: Protein shisa-8 (399 aa).

The signal sequence occupies residues 1–36 (MERAGARGQRCGRRSHGLPLALRLALLLAGSPSGRA). The Extracellular portion of the chain corresponds to 37 to 136 (GAPEEQEIAG…APRDPARERS (100 aa)). The N-linked (GlcNAc...) asparagine glycan is linked to Asn73. The chain crosses the membrane as a helical span at residues 137–157 (HTAVYAVCGVAALLVLVGIGA). Topologically, residues 158–399 (RLGLERAHSP…STNSKAEVTV (242 aa)) are cytoplasmic. Disordered regions lie at residues 207-248 (GDGV…GGSL) and 378-399 (FYSSAGRGPRHLSTNSKAEVTV). Residues 389 to 399 (LSTNSKAEVTV) are compositionally biased toward polar residues.

Belongs to the shisa family. As to quaternary structure, interacts with AMPAR subunits GRIA1 and GRIA2. In terms of tissue distribution, brain-specific. Highly expressed in cerebellum and olfactory bulb.

It localises to the membrane. Functionally, may regulate trafficking and current kinetics of AMPA-type glutamate receptor (AMPAR) at synapses. This chain is Protein shisa-8, found in Mus musculus (Mouse).